The following is a 245-amino-acid chain: 2,3-bisphosphoglycerate-dependent phosphoglycerate mutase (245 aa).

Substrate-binding positions include 8 to 15 (RHGQSLWN), 21 to 22 (TG), Arg60, 87 to 90 (ERHY), Lys98, 114 to 115 (RR), and 183 to 184 (GN). Residue His9 is the Tele-phosphohistidine intermediate of the active site. Glu87 (proton donor/acceptor) is an active-site residue.

The protein belongs to the phosphoglycerate mutase family. BPG-dependent PGAM subfamily.

It catalyses the reaction (2R)-2-phosphoglycerate = (2R)-3-phosphoglycerate. Its pathway is carbohydrate degradation; glycolysis; pyruvate from D-glyceraldehyde 3-phosphate: step 3/5. Its function is as follows. Catalyzes the interconversion of 2-phosphoglycerate and 3-phosphoglycerate. The polypeptide is 2,3-bisphosphoglycerate-dependent phosphoglycerate mutase (Bacillus cereus (strain B4264)).